The primary structure comprises 713 residues: Subtilisin-like protease SBT4.9 (713 aa).

The signal sequence occupies residues 1–24; the sequence is MARRADSFCLISCVLVSFVISVSA. The propeptide at 25–113 is activation peptide; the sequence is VTDDSQDKQV…VFPDINYKLQ (89 aa). Residues 34–112 form the Inhibitor I9 domain; it reads VYVVYMGSLP…SVFPDINYKL (79 aa). The Peptidase S8 domain occupies 117–560; that stretch reads SWDFLGLKEG…AGHVDPIAAI (444 aa). Catalysis depends on Asp145, which acts as the Charge relay system. Asn176 carries an N-linked (GlcNAc...) asparagine glycan. His200 functions as the Charge relay system in the catalytic mechanism. N-linked (GlcNAc...) asparagine glycosylation is found at Asn215 and Asn223. One can recognise a PA domain in the interval 356–415; sequence NYPLYGGSTDGPLLRGKILVSEDKVSSEIVVANINENYHDYAYVSILPSSALSKDDFDSV. N-linked (GlcNAc...) asparagine glycosylation is present at Asn420. Catalysis depends on Ser499, which acts as the Charge relay system. N-linked (GlcNAc...) asparagine glycosylation is found at Asn536, Asn583, Asn627, and Asn637.

Belongs to the peptidase S8 family. The C-terminal propeptide is autocleaved.

Its subcellular location is the secreted. The polypeptide is Subtilisin-like protease SBT4.9 (Arabidopsis thaliana (Mouse-ear cress)).